A 706-amino-acid chain; its full sequence is Termination factor NPH-I homolog (706 aa).

The region spanning 62-227 (IGQGENTRGL…VPCFNMLSGR (166 aa)) is the Helicase ATP-binding domain. 75–82 (HQMGMGKT) serves as a coordination point for ATP. The DEAH box motif lies at 168-171 (DEAH). The 222-residue stretch at 378–599 (KIVCMLKNIK…HLNSAFRDLL (222 aa)) folds into the Helicase C-terminal domain.

It belongs to the DEAD box helicase family. DEAH subfamily. Part of the viral DNA-directed RNA polymerase that consists of 8 polII-like subunits (RPB1, RPB2, RPB3, RPB5, RPB6, RPB7, RPB9, RPB10), a capping enzyme and a termination factor.

It localises to the virion. Functionally, putative DNA-dependent ATPase required for providing the needed energy to achieve the termination of early transcripts. The chain is Termination factor NPH-I homolog from African swine fever virus (isolate Pig/Kenya/KEN-50/1950) (ASFV).